The chain runs to 70 residues: MALTRGGDPAPSVCLVVWFACVYSLLILVVLLLIYRCCIGFQDDLVSRTLAVYRACIQGPICNQTHNSTS.

Residues Cys-14–Ile-34 form a helical membrane-spanning segment.

The protein localises to the virion membrane. This is an uncharacterized protein from Homo sapiens (Human).